The chain runs to 403 residues: Tyrosine--tRNA ligase (403 aa).

Residues 42–51 (PTAPDLHLGH) carry the 'HIGH' region motif. Positions 226-230 (KMSKS) match the 'KMSKS' region motif. K229 contacts ATP. The S4 RNA-binding domain occupies 336–396 (MPISAVLNKA…GKKAFGRVTL (61 aa)).

The protein belongs to the class-I aminoacyl-tRNA synthetase family. TyrS type 2 subfamily. In terms of assembly, homodimer.

It is found in the cytoplasm. It catalyses the reaction tRNA(Tyr) + L-tyrosine + ATP = L-tyrosyl-tRNA(Tyr) + AMP + diphosphate + H(+). Catalyzes the attachment of tyrosine to tRNA(Tyr) in a two-step reaction: tyrosine is first activated by ATP to form Tyr-AMP and then transferred to the acceptor end of tRNA(Tyr). The polypeptide is Tyrosine--tRNA ligase (Pseudomonas savastanoi pv. phaseolicola (strain 1448A / Race 6) (Pseudomonas syringae pv. phaseolicola (strain 1448A / Race 6))).